A 27-amino-acid chain; its full sequence is Paragonial peptide PS-1 (27 aa).

Residues 1–17 show a composition bias toward low complexity; it reads DVPSANANANNQRTAAA. Positions 1-27 are disordered; it reads DVPSANANANNQRTAAAKPQANAEASS.

As to expression, main cells of the accessory glands of males (paragonial gland).

It is found in the secreted. Its function is as follows. Represses female sexual receptivity and stimulates oviposition. This peptide has a low activity. This is Paragonial peptide PS-1 (PapC) from Drosophila funebris (Fruit fly).